The following is a 112-amino-acid chain: uncharacterized protein (112 aa).

The transit peptide at methionine 1 to leucine 21 directs the protein to the mitochondrion.

The protein resides in the mitochondrion. This is an uncharacterized protein from Saccharomyces cerevisiae (strain ATCC 204508 / S288c) (Baker's yeast).